A 269-amino-acid polypeptide reads, in one-letter code: GTP cyclohydrolase FolE2 (269 aa).

It belongs to the GTP cyclohydrolase IV family.

It carries out the reaction GTP + H2O = 7,8-dihydroneopterin 3'-triphosphate + formate + H(+). Its pathway is cofactor biosynthesis; 7,8-dihydroneopterin triphosphate biosynthesis; 7,8-dihydroneopterin triphosphate from GTP: step 1/1. Converts GTP to 7,8-dihydroneopterin triphosphate. The sequence is that of GTP cyclohydrolase FolE2 from Azoarcus sp. (strain BH72).